A 415-amino-acid chain; its full sequence is Arginine biosynthesis bifunctional protein ArgJ (415 aa).

Residues T156, K182, T193, E279, N410, and T415 each coordinate substrate. The active-site Nucleophile is T193.

It belongs to the ArgJ family. As to quaternary structure, heterotetramer of two alpha and two beta chains.

It localises to the cytoplasm. It catalyses the reaction N(2)-acetyl-L-ornithine + L-glutamate = N-acetyl-L-glutamate + L-ornithine. The catalysed reaction is L-glutamate + acetyl-CoA = N-acetyl-L-glutamate + CoA + H(+). It functions in the pathway amino-acid biosynthesis; L-arginine biosynthesis; L-ornithine and N-acetyl-L-glutamate from L-glutamate and N(2)-acetyl-L-ornithine (cyclic): step 1/1. The protein operates within amino-acid biosynthesis; L-arginine biosynthesis; N(2)-acetyl-L-ornithine from L-glutamate: step 1/4. Its function is as follows. Catalyzes two activities which are involved in the cyclic version of arginine biosynthesis: the synthesis of N-acetylglutamate from glutamate and acetyl-CoA as the acetyl donor, and of ornithine by transacetylation between N(2)-acetylornithine and glutamate. In Synechococcus sp. (strain ATCC 27144 / PCC 6301 / SAUG 1402/1) (Anacystis nidulans), this protein is Arginine biosynthesis bifunctional protein ArgJ.